Consider the following 440-residue polypeptide: Adenosylhomocysteinase (440 aa).

Residues Thr-64, Asp-139, and Glu-164 each contribute to the substrate site. 165–167 (TTT) contacts NAD(+). Substrate-binding residues include Lys-194 and Asp-198. Residues Asn-199, 228–233 (GFGDVG), Glu-251, Asn-286, 307–309 (IGH), and Asn-352 each bind NAD(+).

This sequence belongs to the adenosylhomocysteinase family. NAD(+) is required as a cofactor.

It localises to the cytoplasm. The catalysed reaction is S-adenosyl-L-homocysteine + H2O = L-homocysteine + adenosine. Its pathway is amino-acid biosynthesis; L-homocysteine biosynthesis; L-homocysteine from S-adenosyl-L-homocysteine: step 1/1. Functionally, may play a key role in the regulation of the intracellular concentration of adenosylhomocysteine. The polypeptide is Adenosylhomocysteinase (Granulibacter bethesdensis (strain ATCC BAA-1260 / CGDNIH1)).